The chain runs to 597 residues: Arginine--tRNA ligase (597 aa).

The short motif at 125–135 (PNTNKPLHLGH) is the 'HIGH' region element.

It belongs to the class-I aminoacyl-tRNA synthetase family. In terms of assembly, monomer.

It is found in the cytoplasm. It catalyses the reaction tRNA(Arg) + L-arginine + ATP = L-arginyl-tRNA(Arg) + AMP + diphosphate. The sequence is that of Arginine--tRNA ligase from Bacteroides thetaiotaomicron (strain ATCC 29148 / DSM 2079 / JCM 5827 / CCUG 10774 / NCTC 10582 / VPI-5482 / E50).